Here is a 230-residue protein sequence, read N- to C-terminus: Probable GTP-binding protein EngB (230 aa).

Residues 36–224 (ERPKVIVMGR…KHRINKRINI (189 aa)) form the EngB-type G domain. GTP-binding positions include 44–51 (GRSNVGKS), 69–73 (GVTLK), 86–89 (DLPG), 166–169 (NKMD), and 201–203 (VPA). S51 and T71 together coordinate Mg(2+).

This sequence belongs to the TRAFAC class TrmE-Era-EngA-EngB-Septin-like GTPase superfamily. EngB GTPase family. Mg(2+) is required as a cofactor.

In terms of biological role, necessary for normal cell division and for the maintenance of normal septation. This Methanococcus maripaludis (strain DSM 14266 / JCM 13030 / NBRC 101832 / S2 / LL) protein is Probable GTP-binding protein EngB.